The primary structure comprises 262 residues: Nickel import ATP-binding protein NikD (262 aa).

Positions 6-249 (LAIEGLTATT…PGHEVTRMLV (244 aa)) constitute an ABC transporter domain. 42-49 (GASGSGKS) serves as a coordination point for ATP.

It belongs to the ABC transporter superfamily. Nickel importer (TC 3.A.1.5.3) family. The complex is composed of two ATP-binding proteins (NikD and NikE), two transmembrane proteins (NikB and NikC) and a solute-binding protein (NikA).

The protein localises to the cell inner membrane. It carries out the reaction Ni(2+)(out) + ATP + H2O = Ni(2+)(in) + ADP + phosphate + H(+). In terms of biological role, part of the ABC transporter complex NikABCDE involved in nickel import. Responsible for energy coupling to the transport system. This is Nickel import ATP-binding protein NikD from Brucella abortus biovar 1 (strain 9-941).